The following is a 246-amino-acid chain: Probable maleylacetoacetate isomerase 1 (246 aa).

The GST N-terminal domain occupies 32-116; sequence TKPILYSYWP…YLEETRPQPA (85 aa). Glutathione contacts are provided by residues 42–47, Val-88, 100–101, Gln-140, and 144–146; these read SSCSWR, DS, and NVS. Positions 121 to 241 constitute a GST C-terminal domain; the sequence is DPVKRAKIRE…HPSTQPDCPP (121 aa).

Belongs to the GST superfamily. Zeta family. Glutathione serves as cofactor.

The protein resides in the cytoplasm. The enzyme catalyses 4-maleylacetoacetate = 4-fumarylacetoacetate. The catalysed reaction is RX + glutathione = an S-substituted glutathione + a halide anion + H(+). It functions in the pathway amino-acid degradation; L-phenylalanine degradation; acetoacetate and fumarate from L-phenylalanine: step 5/6. Functionally, catalyzes the glutathione dependent oxygenation of dichloroacetic acid to glyoxylic acid in vitro. Possesses low glutathione thioltransferase activity toward 4-hydroxynonenal (4-HNE). Has no glutathione thioltransferase activity with adrenochrome, phenethyl isothiocyanate (PEITC), 5-hydroperoxyeicosatetraenoic acid ((5S)-HpETE), prostaglandin A2 (PGA2) or 2-hydroxyethyldisulfide (HED). In Drosophila melanogaster (Fruit fly), this protein is Probable maleylacetoacetate isomerase 1 (GstZ1).